The following is a 794-amino-acid chain: Interphotoreceptor matrix proteoglycan 1 (794 aa).

Positions 1–20 (MHLEAARVIFFLWIFLQVQG) are cleaved as a signal peptide. Residues 202–213 (MTTAQRNPQLHP) show a composition bias toward polar residues. 3 disordered regions span residues 202–221 (MTTAQRNPQLHPSRTPRVPT), 314–355 (KGKA…LYPT), and 413–449 (SPELPLGQPRLETVDRAGHSPPGASPTDGWSPPAMTS). The SEA 1 domain maps to 236 to 357 (LEQKVELSIS…KQRELYPTAS (122 aa)). Over residues 332–351 (NKIESEGDPRGTTEEEKQRE) the composition is skewed to basic and acidic residues. O-linked (GalNAc...) threonine glycans are attached at residues Thr-425 and Thr-439. Ser-443 is a glycosylation site (O-linked (GalNAc...) serine). O-linked (GalNAc...) threonine glycans are attached at residues Thr-448 and Thr-450. An SEA 2 domain is found at 579-692 (RELVVFFSLR…YSLDVEPADQ (114 aa)). The N-linked (GlcNAc...) asparagine glycan is linked to Asn-624. Positions 629 to 637 (KQLEILNFR) match the Heparin- and hyaluronan-binding motif. N-linked (GlcNAc...) asparagine glycosylation occurs at Asn-656.

Post-translationally, highly glycosylated (N- and O-linked carbohydrates and sialic acid).

The protein resides in the cell projection. It is found in the cilium. The protein localises to the photoreceptor outer segment. It localises to the secreted. Its subcellular location is the extracellular space. The protein resides in the extracellular matrix. It is found in the interphotoreceptor matrix. The protein localises to the photoreceptor inner segment. Its function is as follows. Chondroitin sulfate-, heparin- and hyaluronan-binding protein. May serve to form a basic macromolecular scaffold comprising the insoluble interphotoreceptor matrix. In Bos taurus (Bovine), this protein is Interphotoreceptor matrix proteoglycan 1 (IMPG1).